Reading from the N-terminus, the 308-residue chain is Zinc transporter ZIP9 (308 aa).

A helical transmembrane segment spans residues 4–24 (FLSISLLSVAMLVGCYVAGII). N-linked (GlcNAc...) asparagine glycosylation occurs at N29. The next 5 helical transmembrane spans lie at 35–55 (LKLV…AVIV), 107–127 (AYIG…DQIG), 147–167 (ITTT…LGAA), 177–197 (LIVF…LVSF), and 211–231 (HLLV…LGLS). N-linked (GlcNAc...) asparagine glycosylation occurs at N242. Transmembrane regions (helical) follow at residues 245–265 (GVAM…HVLP) and 287–307 (LEVA…IGHQ).

This sequence belongs to the ZIP transporter (TC 2.A.5) family.

It localises to the golgi apparatus. It is found in the trans-Golgi network membrane. The protein resides in the cell membrane. Its subcellular location is the cytoplasm. The protein localises to the perinuclear region. It localises to the mitochondrion. It is found in the nucleus. It catalyses the reaction Zn(2+)(in) = Zn(2+)(out). Its function is as follows. Transports zinc ions across cell and organelle membranes into the cytoplasm and regulates intracellular zinc homeostasis. Participates in the zinc ions efflux out of the secretory compartments. Regulates intracellular zinc level, resulting in the enhancement of AKT1 and MAPK3/MAPK1 (Erk1/2) phosphorylation in response to the BCR activation. Also functions as a membrane androgen receptor that mediates, through a G protein, the non-classical androgen signaling pathway, characterized by the activation of MAPK3/MAPK1 (Erk1/2) and transcription factors CREB1 or ATF1. This pathway contributes to CLDN1 and CLDN5 expression and tight junction formation between adjacent Sertoli cells. Mediates androgen-induced vascular endothelial cell proliferation through activation of an inhibitory G protein leading to the AKT1 and MAPK3/MAPK1 (Erk1/2) activation which in turn modulate inhibition (phosphorylation) of GSK3B and CCND1 transcription. Moreover, has dual functions as a membrane-bound androgen receptor and as an androgen-dependent zinc transporter both of which are mediated through an inhibitory G protein (Gi) that mediates both MAP kinase and zinc signaling leading to the androgen-dependent apoptotic process. In Mus musculus (Mouse), this protein is Zinc transporter ZIP9.